Consider the following 494-residue polypeptide: Prenylcysteine oxidase 1-like (494 aa).

The first 22 residues, 1–22 (MARAAPLLAALTALLAAAAAGG), serve as a signal peptide directing secretion. Asn-342 is a glycosylation site (N-linked (GlcNAc...) asparagine).

Belongs to the prenylcysteine oxidase family. FAD is required as a cofactor.

It is found in the secreted. In terms of biological role, likely to have oxidoreductase activity. Required in the mevalonate pathway to regulate prenylation and enhances the bactericidal activity of neutrophils. This Homo sapiens (Human) protein is Prenylcysteine oxidase 1-like (PCYOX1L).